Reading from the N-terminus, the 334-residue chain is Ketol-acid reductoisomerase (NADP(+)) (334 aa).

Residues 1–181 (MNRYYDKNAD…GGGRTGILET (181 aa)) form the KARI N-terminal Rossmann domain. Residues 24-27 (YGSQ), arginine 47, serine 50, serine 52, and 82-85 (DEFQ) each bind NADP(+). Histidine 107 is an active-site residue. An NADP(+)-binding site is contributed by glycine 133. The KARI C-terminal knotted domain occupies 182–323 (SFKDETETDL…ESLRSMMPWI (142 aa)). Residues aspartate 190, glutamate 194, glutamate 226, and glutamate 230 each contribute to the Mg(2+) site. Serine 251 serves as a coordination point for substrate.

This sequence belongs to the ketol-acid reductoisomerase family. The cofactor is Mg(2+).

It catalyses the reaction (2R)-2,3-dihydroxy-3-methylbutanoate + NADP(+) = (2S)-2-acetolactate + NADPH + H(+). It carries out the reaction (2R,3R)-2,3-dihydroxy-3-methylpentanoate + NADP(+) = (S)-2-ethyl-2-hydroxy-3-oxobutanoate + NADPH + H(+). It functions in the pathway amino-acid biosynthesis; L-isoleucine biosynthesis; L-isoleucine from 2-oxobutanoate: step 2/4. It participates in amino-acid biosynthesis; L-valine biosynthesis; L-valine from pyruvate: step 2/4. Its function is as follows. Involved in the biosynthesis of branched-chain amino acids (BCAA). Catalyzes an alkyl-migration followed by a ketol-acid reduction of (S)-2-acetolactate (S2AL) to yield (R)-2,3-dihydroxy-isovalerate. In the isomerase reaction, S2AL is rearranged via a Mg-dependent methyl migration to produce 3-hydroxy-3-methyl-2-ketobutyrate (HMKB). In the reductase reaction, this 2-ketoacid undergoes a metal-dependent reduction by NADPH to yield (R)-2,3-dihydroxy-isovalerate. In Ruthia magnifica subsp. Calyptogena magnifica, this protein is Ketol-acid reductoisomerase (NADP(+)).